Consider the following 631-residue polypeptide: Dolichyl-diphosphooligosaccharide--protein glycosyltransferase subunit 2 (631 aa).

The signal sequence occupies residues 1-22 (MALPGSSTVFLLALTIIASTQA). The Lumenal portion of the chain corresponds to 23–540 (LTPTHYLTKH…REPEKRPPTV (518 aa)). A glycan (N-linked (GlcNAc...) asparagine) is linked at N106. K154 participates in a covalent cross-link: Glycyl lysine isopeptide (Lys-Gly) (interchain with G-Cter in ubiquitin). Residues 541–561 (VSNTFTALILSPLLLLFALWI) traverse the membrane as a helical segment. Over 562–571 (RIGANVSNFT) the chain is Cytoplasmic. The helical transmembrane segment at 572 to 592 (FAPSTIVFHLGHAAMLGLMYV) threads the bilayer. The Lumenal portion of the chain corresponds to 593-596 (YWTQ). The chain crosses the membrane as a helical span at residues 597-617 (LNMFQTLKYLAILGSVTFLAG). The Cytoplasmic segment spans residues 618–631 (NRMLAQQAIKRTAH).

It belongs to the SWP1 family. In terms of assembly, component of the oligosaccharyltransferase (OST) complex. OST exists in two different complex forms which contain common core subunits RPN1, RPN2, OST48, OST4, DAD1 and TMEM258, either STT3A or STT3B as catalytic subunits, and form-specific accessory subunits. STT3A complex assembly occurs through the formation of 3 subcomplexes. Subcomplex 1 contains RPN1 and TMEM258, subcomplex 2 contains the STT3A-specific subunits STT3A, DC2/OSTC, and KCP2 as well as the core subunit OST4, and subcomplex 3 contains RPN2, DAD1, and OST48. The STT3A complex can form stable complexes with the Sec61 complex or with both the Sec61 and TRAP complexes. Interacts with DDI2. Interacts with TMEM35A/NACHO.

Its subcellular location is the endoplasmic reticulum. The protein resides in the endoplasmic reticulum membrane. It functions in the pathway protein modification; protein glycosylation. Functionally, subunit of the oligosaccharyl transferase (OST) complex that catalyzes the initial transfer of a defined glycan (Glc(3)Man(9)GlcNAc(2) in eukaryotes) from the lipid carrier dolichol-pyrophosphate to an asparagine residue within an Asn-X-Ser/Thr consensus motif in nascent polypeptide chains, the first step in protein N-glycosylation. N-glycosylation occurs cotranslationally and the complex associates with the Sec61 complex at the channel-forming translocon complex that mediates protein translocation across the endoplasmic reticulum (ER). All subunits are required for a maximal enzyme activity. This Bos taurus (Bovine) protein is Dolichyl-diphosphooligosaccharide--protein glycosyltransferase subunit 2.